A 192-amino-acid polypeptide reads, in one-letter code: Putative BTB/POZ domain-containing protein At4g04090 (192 aa).

Residues 23 to 96 (VDVRLMARDS…TYSDGSMLSE (74 aa)) form the BTB domain.

It functions in the pathway protein modification; protein ubiquitination. In terms of biological role, may act as a substrate-specific adapter of an E3 ubiquitin-protein ligase complex (CUL3-RBX1-BTB) which mediates the ubiquitination and subsequent proteasomal degradation of target proteins. In Arabidopsis thaliana (Mouse-ear cress), this protein is Putative BTB/POZ domain-containing protein At4g04090.